The following is a 185-amino-acid chain: Peptidyl-tRNA hydrolase (185 aa).

Position 14 (Tyr14) interacts with tRNA. His19 acts as the Proton acceptor in catalysis. Residues Phe64, Asn66, and Asn112 each coordinate tRNA.

Belongs to the PTH family. Monomer.

The protein localises to the cytoplasm. It carries out the reaction an N-acyl-L-alpha-aminoacyl-tRNA + H2O = an N-acyl-L-amino acid + a tRNA + H(+). Functionally, hydrolyzes ribosome-free peptidyl-tRNAs (with 1 or more amino acids incorporated), which drop off the ribosome during protein synthesis, or as a result of ribosome stalling. Catalyzes the release of premature peptidyl moieties from peptidyl-tRNA molecules trapped in stalled 50S ribosomal subunits, and thus maintains levels of free tRNAs and 50S ribosomes. In Levilactobacillus brevis (strain ATCC 367 / BCRC 12310 / CIP 105137 / JCM 1170 / LMG 11437 / NCIMB 947 / NCTC 947) (Lactobacillus brevis), this protein is Peptidyl-tRNA hydrolase.